Reading from the N-terminus, the 70-residue chain is DNA gyrase inhibitor YacG (70 aa).

4 residues coordinate Zn(2+): Cys-7, Cys-10, Cys-26, and Cys-30.

Belongs to the DNA gyrase inhibitor YacG family. Interacts with GyrB. Zn(2+) serves as cofactor.

In terms of biological role, inhibits all the catalytic activities of DNA gyrase by preventing its interaction with DNA. Acts by binding directly to the C-terminal domain of GyrB, which probably disrupts DNA binding by the gyrase. This chain is DNA gyrase inhibitor YacG, found in Shewanella woodyi (strain ATCC 51908 / MS32).